The chain runs to 878 residues: DNA mismatch repair protein MutS (878 aa).

618-625 (GPNMGGKS) is an ATP binding site. 2 stretches are compositionally biased toward basic and acidic residues: residues 800-811 (LEEESSRQRAEP) and 863-878 (GADKKARGDAVDARSR). Disordered stretches follow at residues 800-842 (LEEE…PDEL) and 859-878 (SGEEGADKKARGDAVDARSR).

Belongs to the DNA mismatch repair MutS family.

This protein is involved in the repair of mismatches in DNA. It is possible that it carries out the mismatch recognition step. This protein has a weak ATPase activity. In Alkalilimnicola ehrlichii (strain ATCC BAA-1101 / DSM 17681 / MLHE-1), this protein is DNA mismatch repair protein MutS.